We begin with the raw amino-acid sequence, 364 residues long: Histidinol-phosphate aminotransferase BQ2027_MB2256C (364 aa).

Lysine 220 carries the post-translational modification N6-(pyridoxal phosphate)lysine.

This sequence belongs to the class-I pyridoxal-phosphate-dependent aminotransferase family. Monomer. It depends on pyridoxal 5'-phosphate as a cofactor.

It is found in the secreted. The protein resides in the cell wall. It carries out the reaction L-histidinol phosphate + 2-oxoglutarate = 3-(imidazol-4-yl)-2-oxopropyl phosphate + L-glutamate. Aminotransferase that catalyzes the conversion of histidinol phosphate and 2-oxoglutarate into L-glutamate and imidazole acetol phosphate. Might play a significant role in mediating histidine biosynthesis during infection. Facilitates mycobacterial survival and virulence in macrophages. The polypeptide is Histidinol-phosphate aminotransferase BQ2027_MB2256C (Mycobacterium bovis (strain ATCC BAA-935 / AF2122/97)).